The following is a 715-amino-acid chain: MAADESSQNTLRLQFKAMQEMQHKRLQKQMEKKREKELSLKSRADDQEEPLEVSDGLSLLHAGEPNSKNSFEKRVLEDEIEHLRNELRETVDENGRLYKLLKERDFEIKHLKKKIEEDRFAFTGTAGVAGDVVATKIVELSKKNRLLMAESEGAKTRVKQLTNRIQELERELQTALTRLSAKGATDAGAKPPRAQMGDRALLETPEVKALQDRLVATNLKMSDLRNQIQSVKQELRMAQKVLAREVGEDINVQQLLSSPGTWRGRAQQILVLQSKVQELEKQLGQARSQSAGTASDELSVYPDPRKLSAQEKNLLRIRSLEREKQEGLEKLASERDVLQRELEELKKKFEGMRSRNKLLSSEMKTLKSQMGTLVEKGRHDDELIDALMDQLKQLQEILGSLSLQEEKTRVSQHHLDQQLNSEAQRSNSLVAQLQAMVAEREAKVRQLEMEIGQLNVHYLRNKGVGEGSSGREVSPAYTQFLEDPGLTKSPASAGDHVGRLGSSRSVTSLGHTLVESALTRPSLPSPHRTSPRFSDSPEQKGWQAQVSEIKALWQAAEVERDRLTEFVTVLQKRVEESNSKLLESERKLQEERHRTVVLEQHLEKIRLEPGKASASQRAAPRTKTGLPTSNNRHNPTGSEKKDPSFAQLSDVPVESQMEELTTRLAIQVEENEMLKAALGSALRGKEEDFRMYHEILGQVKSVFLQALRQQKTGKQ.

Coiled coils occupy residues 16-105 (KAMQ…KERD) and 134-458 (ATKI…NVHY). Residues 20-65 (EMQHKRLQKQMEKKREKELSLKSRADDQEEPLEVSDGLSLLHAGEP) form a disordered region. A compositionally biased stretch (basic and acidic residues) spans 28-45 (KQMEKKREKELSLKSRAD). 3 positions are modified to phosphoserine: S258, S469, and S536. Disordered stretches follow at residues 482-541 (EDPG…EQKG) and 607-645 (LEPGKASASQRAAPRTKTGLPTSNNRHNPTGSEKKDPSF). Residues 554-608 (QAAEVERDRLTEFVTVLQKRVEESNSKLLESERKLQEERHRTVVLEQHLEKIRLE) are a coiled coil. The segment covering 625 to 637 (GLPTSNNRHNPTG) has biased composition (polar residues). Positions 653–683 (VESQMEELTTRLAIQVEENEMLKAALGSALR) form a coiled coil.

In terms of assembly, interacts with PCM1, CEP290 and PCNT.

It localises to the cytoplasm. The protein resides in the cytoskeleton. Its subcellular location is the microtubule organizing center. The protein localises to the centrosome. It is found in the centriolar satellite. It localises to the cilium basal body. In terms of biological role, required for primary cilia formation and promotes the localization of the ciliopathy protein BBS4 to both centriolar satellites and cilia. The sequence is that of Coiled-coil domain-containing protein 13 from Homo sapiens (Human).